The sequence spans 199 residues: Small ribosomal subunit protein uS4 (199 aa).

In terms of domain architecture, S4 RNA-binding spans serine 91–leucine 154.

It belongs to the universal ribosomal protein uS4 family. Part of the 30S ribosomal subunit. Contacts protein S5. The interaction surface between S4 and S5 is involved in control of translational fidelity.

Its function is as follows. One of the primary rRNA binding proteins, it binds directly to 16S rRNA where it nucleates assembly of the body of the 30S subunit. With S5 and S12 plays an important role in translational accuracy. The sequence is that of Small ribosomal subunit protein uS4 from Brevibacillus brevis (strain 47 / JCM 6285 / NBRC 100599).